The sequence spans 292 residues: Coatomer subunit epsilon (292 aa).

Belongs to the COPE family. Oligomeric complex that consists of at least the alpha, beta, beta', gamma, delta, epsilon and zeta subunits.

The protein resides in the cytoplasm. It localises to the golgi apparatus membrane. It is found in the cytoplasmic vesicle. Its subcellular location is the COPI-coated vesicle membrane. The coatomer is a cytosolic protein complex that binds to dilysine motifs and reversibly associates with Golgi non-clathrin-coated vesicles, which further mediate biosynthetic protein transport from the ER, via the Golgi up to the trans Golgi network. The coatomer complex is required for budding from Golgi membranes, and is essential for the retrograde Golgi-to-ER transport of dilysine-tagged proteins. The polypeptide is Coatomer subunit epsilon (cope-1) (Caenorhabditis elegans).